The sequence spans 325 residues: Probable WRKY transcription factor 11 (325 aa).

Residues lysine 240–serine 306 constitute a DNA-binding region (WRKY).

The protein belongs to the WRKY group II-d family. In young, mature and senescent leaves.

It is found in the nucleus. In terms of biological role, transcription factor. Interacts specifically with the W box (5'-(T)TGAC[CT]-3'), a frequently occurring elicitor-responsive cis-acting element. Regulates rhizobacterium B.cereus AR156-induced systemic resistance (ISR) to P.syringae pv. tomato DC3000, probably by activating the jasmonic acid (JA)- signaling pathway. The polypeptide is Probable WRKY transcription factor 11 (WRKY11) (Arabidopsis thaliana (Mouse-ear cress)).